A 331-amino-acid polypeptide reads, in one-letter code: Cytosolic sulfotransferase 1 (331 aa).

74-79 (KSGTTW) serves as a coordination point for 3'-phosphoadenylyl sulfate. His-143 serves as the catalytic Proton acceptor. 3'-phosphoadenylyl sulfate-binding positions include Arg-165, Ser-173, Tyr-231, and 297-299 (RKG).

This sequence belongs to the sulfotransferase 1 family.

The protein resides in the cytoplasm. Functionally, sulfotransferase that utilizes 3'-phospho-5'-adenylyl sulfate (PAPS) as sulfonate donor. This Arabidopsis thaliana (Mouse-ear cress) protein is Cytosolic sulfotransferase 1 (SOT1).